The primary structure comprises 354 residues: MRITLENGIPAAAASDRTEWPGLIVIAGPTATGKSRQALLLAQRLGSPLLNADSRQVYREFDIGTAKPTPAEQALWPHELIDIVDPCHTYTVAEFQQAAQARIAEAHRQGQTPILVGGTGLYIQSVTAGLGIPAVPPQPQLRRQLETWPPEIRYAWLQQLDPVAAQHIHPHDAVRTLRALEIVYTTGKPASSLRRAHPPHYPILILGLRCPMPRLEQRIARRTAEMMERGWIEEVKTLRERYGPDLPLLQTLGYAEIGAYLEGRIPEAELQPLIVRRTRQFAKRQMTWFRAMLGIQKGHAYGTLSGRGRCVALWLDCEAEDLPEQIWKQVKAWMAAPTTVETSPAAAEHRLFDP.

Position 28–35 (28–35) interacts with ATP; that stretch reads GPTATGKS. 30 to 35 lines the substrate pocket; that stretch reads TATGKS. The interaction with substrate tRNA stretch occupies residues 53-56; that stretch reads DSRQ.

The protein belongs to the IPP transferase family. As to quaternary structure, monomer. Mg(2+) serves as cofactor.

It catalyses the reaction adenosine(37) in tRNA + dimethylallyl diphosphate = N(6)-dimethylallyladenosine(37) in tRNA + diphosphate. In terms of biological role, catalyzes the transfer of a dimethylallyl group onto the adenine at position 37 in tRNAs that read codons beginning with uridine, leading to the formation of N6-(dimethylallyl)adenosine (i(6)A). The polypeptide is tRNA dimethylallyltransferase (Synechococcus sp. (strain JA-2-3B'a(2-13)) (Cyanobacteria bacterium Yellowstone B-Prime)).